Reading from the N-terminus, the 313-residue chain is tRNA dimethylallyltransferase (313 aa).

An ATP-binding site is contributed by 9–16 (GPTAVGKT). 11–16 (TAVGKT) serves as a coordination point for substrate. Residues 34–37 (DSMQ) form an interaction with substrate tRNA region.

The protein belongs to the IPP transferase family. In terms of assembly, monomer. It depends on Mg(2+) as a cofactor.

It catalyses the reaction adenosine(37) in tRNA + dimethylallyl diphosphate = N(6)-dimethylallyladenosine(37) in tRNA + diphosphate. Its function is as follows. Catalyzes the transfer of a dimethylallyl group onto the adenine at position 37 in tRNAs that read codons beginning with uridine, leading to the formation of N6-(dimethylallyl)adenosine (i(6)A). This is tRNA dimethylallyltransferase from Lachnoclostridium phytofermentans (strain ATCC 700394 / DSM 18823 / ISDg) (Clostridium phytofermentans).